The sequence spans 569 residues: Membrane protein insertase YidC (569 aa).

Residues 6–26 (FVLFLIFATSLLFLWDAWQKE) form a helical membrane-spanning segment. Composition is skewed to polar residues over residues 32 to 52 (QGPK…TAGT) and 62 to 74 (LASS…STAE). Positions 32–81 (QGPKTAVQGTETQANTGTAGTAETPVPGDQLASSVPQRGSTAENGAPVRA) are disordered. The next 5 helical transmembrane spans lie at 348-368 (VVDY…LSLF), 375-395 (WGVA…PLSA), 442-462 (GGCL…WVLL), 479-499 (LSAP…MFLQ), and 519-539 (PLAF…YSLV).

The protein belongs to the OXA1/ALB3/YidC family. Type 1 subfamily. Interacts with the Sec translocase complex via SecD. Specifically interacts with transmembrane segments of nascent integral membrane proteins during membrane integration.

It is found in the cell inner membrane. Its function is as follows. Required for the insertion and/or proper folding and/or complex formation of integral membrane proteins into the membrane. Involved in integration of membrane proteins that insert both dependently and independently of the Sec translocase complex, as well as at least some lipoproteins. Aids folding of multispanning membrane proteins. The polypeptide is Membrane protein insertase YidC (Nitrosospira multiformis (strain ATCC 25196 / NCIMB 11849 / C 71)).